The primary structure comprises 199 residues: Dephospho-CoA kinase (199 aa).

The DPCK domain occupies 3 to 199 (ILGLTGSIGM…ATAKMPQRRA (197 aa)). An ATP-binding site is contributed by 11 to 16 (GMGKST).

This sequence belongs to the CoaE family.

It is found in the cytoplasm. It catalyses the reaction 3'-dephospho-CoA + ATP = ADP + CoA + H(+). Its pathway is cofactor biosynthesis; coenzyme A biosynthesis; CoA from (R)-pantothenate: step 5/5. Its function is as follows. Catalyzes the phosphorylation of the 3'-hydroxyl group of dephosphocoenzyme A to form coenzyme A. This Rhodopseudomonas palustris (strain BisB18) protein is Dephospho-CoA kinase.